A 304-amino-acid chain; its full sequence is Homoserine kinase (304 aa).

90-100 (PLARGLGSSAS) serves as a coordination point for ATP.

It belongs to the GHMP kinase family. Homoserine kinase subfamily.

The protein resides in the cytoplasm. The enzyme catalyses L-homoserine + ATP = O-phospho-L-homoserine + ADP + H(+). It functions in the pathway amino-acid biosynthesis; L-threonine biosynthesis; L-threonine from L-aspartate: step 4/5. Its function is as follows. Catalyzes the ATP-dependent phosphorylation of L-homoserine to L-homoserine phosphate. The polypeptide is Homoserine kinase (Staphylococcus aureus (strain MSSA476)).